Here is a 166-residue protein sequence, read N- to C-terminus: Cytochrome P450 regulator dap1 (166 aa).

Residues 4 to 21 traverse the membrane as a helical segment; it reads TQVVFIVTLFLYLLITRW. Positions 42 to 145 constitute a Cytochrome b5 heme-binding domain; it reads DYTPAELKEY…QKYQAVGRLI (104 aa). Ser108 is modified (phosphoserine). Tyr138 lines the heme pocket.

The protein belongs to the cytochrome b5 family. MAPR subfamily. Interacts with erg5 and erg11.

The protein resides in the endoplasmic reticulum. It localises to the membrane. Its function is as follows. Required for sterol biosynthesis. Functions as a positive regulator of cytochrome P450 enzymes erg5 and erg11. Function requires bound heme. This chain is Cytochrome P450 regulator dap1 (dap1), found in Schizosaccharomyces pombe (strain 972 / ATCC 24843) (Fission yeast).